The primary structure comprises 275 residues: Phosphate import ATP-binding protein PstB (275 aa).

In terms of domain architecture, ABC transporter spans 29 to 270 (LEIKDLDLYY…PNKKKTEDYI (242 aa)). 61 to 68 (GPSGCGKS) provides a ligand contact to ATP.

This sequence belongs to the ABC transporter superfamily. Phosphate importer (TC 3.A.1.7) family. The complex is composed of two ATP-binding proteins (PstB), two transmembrane proteins (PstC and PstA) and a solute-binding protein (PstS).

It is found in the cell inner membrane. It catalyses the reaction phosphate(out) + ATP + H2O = ADP + 2 phosphate(in) + H(+). In terms of biological role, part of the ABC transporter complex PstSACB involved in phosphate import. Responsible for energy coupling to the transport system. The polypeptide is Phosphate import ATP-binding protein PstB (Pseudoalteromonas translucida (strain TAC 125)).